Reading from the N-terminus, the 600-residue chain is Methionine--tRNA ligase (600 aa).

Positions Pro-12–His-22 match the 'HIGH' region motif. Residues Cys-144, Cys-147, Cys-157, and Cys-160 each contribute to the Zn(2+) site. Residues Lys-351 to Ser-355 carry the 'KMSKS' region motif. Ser-354 contributes to the ATP binding site.

Belongs to the class-I aminoacyl-tRNA synthetase family. MetG type 1 subfamily. Monomer. Zn(2+) is required as a cofactor.

It is found in the cytoplasm. It carries out the reaction tRNA(Met) + L-methionine + ATP = L-methionyl-tRNA(Met) + AMP + diphosphate. In terms of biological role, is required not only for elongation of protein synthesis but also for the initiation of all mRNA translation through initiator tRNA(fMet) aminoacylation. The chain is Methionine--tRNA ligase from Chloroflexus aggregans (strain MD-66 / DSM 9485).